The primary structure comprises 780 residues: Exocyst complex component 3-like protein (780 aa).

The protein belongs to the SEC6 family.

The protein resides in the cytoplasmic vesicle. Its subcellular location is the secretory vesicle. As part of the exocyst, may play a role in regulated exocytosis. This is Exocyst complex component 3-like protein (exoc3l1) from Danio rerio (Zebrafish).